A 144-amino-acid chain; its full sequence is Large ribosomal subunit protein uL16 (144 aa).

The protein belongs to the universal ribosomal protein uL16 family. Part of the 50S ribosomal subunit.

In terms of biological role, binds 23S rRNA and is also seen to make contacts with the A and possibly P site tRNAs. This is Large ribosomal subunit protein uL16 from Ligilactobacillus salivarius (strain UCC118) (Lactobacillus salivarius).